The sequence spans 523 residues: Ubiquitin carboxyl-terminal hydrolase 22-B (523 aa).

A UBP-type zinc finger spans residues 4–121 (AGCSHVNSFK…KEEQRKAWKL (118 aa)). Zn(2+) contacts are provided by Cys-6, His-8, Cys-46, Cys-49, Cys-59, Cys-62, Cys-67, His-72, His-76, His-82, Cys-95, and Cys-98. Residues 174–518 (RGLINLGNTC…EGYLLFYHKQ (345 aa)) enclose the USP domain. Cys-183 serves as the catalytic Nucleophile. The Proton acceptor role is filled by His-477.

The protein belongs to the peptidase C19 family. UBP8 subfamily. As to quaternary structure, component of some SAGA transcription coactivator-HAT complexes.

The protein localises to the nucleus. The enzyme catalyses Thiol-dependent hydrolysis of ester, thioester, amide, peptide and isopeptide bonds formed by the C-terminal Gly of ubiquitin (a 76-residue protein attached to proteins as an intracellular targeting signal).. Histone deubiquitinating component of the transcription regulatory histone acetylation (HAT) complex SAGA. Catalyzes the deubiquitination of both histones H2A and H2B, thereby acting as a coactivator. Recruited to specific gene promoters by activators, where it is required for transcription. The protein is Ubiquitin carboxyl-terminal hydrolase 22-B (usp22-b) of Xenopus laevis (African clawed frog).